The following is a 430-amino-acid chain: Glutamate-1-semialdehyde 2,1-aminomutase (430 aa).

Lys-270 is subject to N6-(pyridoxal phosphate)lysine.

This sequence belongs to the class-III pyridoxal-phosphate-dependent aminotransferase family. HemL subfamily. As to quaternary structure, homodimer. Pyridoxal 5'-phosphate is required as a cofactor.

It is found in the cytoplasm. The enzyme catalyses (S)-4-amino-5-oxopentanoate = 5-aminolevulinate. Its pathway is porphyrin-containing compound metabolism; protoporphyrin-IX biosynthesis; 5-aminolevulinate from L-glutamyl-tRNA(Glu): step 2/2. The sequence is that of Glutamate-1-semialdehyde 2,1-aminomutase from Cupriavidus necator (strain ATCC 17699 / DSM 428 / KCTC 22496 / NCIMB 10442 / H16 / Stanier 337) (Ralstonia eutropha).